A 623-amino-acid chain; its full sequence is MNRLRVARLTPLELLLSLMSLLLGTRPHGSPGPLQCYSVGPLGILNCSWEPLGDLETPPVLYHQSQKYHPNRVWEVKVPSKQSWVTIPREQFTMADKLLIWGTQKGRPLWSSVSVNLETQMKPDTPQIFSQVDISEEATLEATVQWAPPVWPPQKVLICQFRYKECQAETWTRLEPQLKTDGLTPVEMQNLEPGTCYQVSGRCQVENGYPWGEWSSPLSFQTPFLDPEDVWVSGTVCETSGKRAALLVWKDPRPCVQVTYTVWFGAGDITTTQEEVPCCKSPVPAWMEWAVVSPGNSTSWVPPTNLSLVCLAPESAPCDVGVSSADGSPGIKVTWKQGTRKPLEYVVDWAQDGDSLDKLNWTRLPPGNLSTLLPGEFKGGVPYRITVTAVYSGGLAAAPSVWGFREELVPLAGPAVWRLPDDPPGTPVVAWGEVPRHQLRGQATHYTFCIQSRGLSTVCRNVSSQTQTATLPNLHLGSFKLWVTVSTVAGQGPPGPNLSLHLPDNRIRWKALPWFLSLWGLLLMGCGLSLASTRCLQARCLHWRHKLLPQWIWERVPDPANSNSGQPYIKEVSLPQPPKDGPILEVEEVELQPVVESPKASAPIYSGYEKHFLPTPEELGLLV.

The first 24 residues, 1-24, serve as a signal peptide directing secretion; the sequence is MNRLRVARLTPLELLLSLMSLLLG. Over 25–510 the chain is Extracellular; that stretch reads TRPHGSPGPL…HLPDNRIRWK (486 aa). Fibronectin type-III domains are found at residues 30-124 and 125-225; these read SPGP…MKPD and TPQI…TPFL. An N-linked (GlcNAc...) asparagine glycan is attached at asparagine 46. Positions 211-215 match the WSXWS motif motif; it reads WGEWS. N-linked (GlcNAc...) asparagine glycans are attached at residues asparagine 296, asparagine 305, asparagine 360, asparagine 368, and asparagine 461. Fibronectin type-III domains lie at 316 to 412 and 413 to 505; these read APCD…VPLA and GPAV…LPDN. Residues 511–531 form a helical membrane-spanning segment; sequence ALPWFLSLWGLLLMGCGLSLA. The Cytoplasmic segment spans residues 532–623; that stretch reads STRCLQARCL…PTPEELGLLV (92 aa). The Box 1 motif signature appears at 552–560; the sequence is IWERVPDPA.

Belongs to the type I cytokine receptor family. Type 2 subfamily. As to expression, expressed in CD4+ and CD8+ T-cells, B-cells, natural killer cells and macrophages. Highest levels in CD4+ T-cells and natural killer cells. Expression highest in Th0 cells.

It is found in the membrane. Receptor for IL27. Requires IL6ST/GP130 to mediate signal transduction in response to IL27. This signaling system acts through STAT3 and STAT1. Involved in the regulation of Th1-type immune responses. Also appears to be involved in innate defense mechanisms. The sequence is that of Interleukin-27 receptor subunit alpha (Il27ra) from Mus musculus (Mouse).